The primary structure comprises 610 residues: UvrABC system protein C (610 aa).

Residues 16 to 94 (SQPGVYRMYD…IKLYQPRYNV (79 aa)) form the GIY-YIG domain. Residues 204-239 (DQVLTQLIARMEKASQDLAFEEAARIRDQIQAVRRV) form the UVR domain.

The protein belongs to the UvrC family. Interacts with UvrB in an incision complex.

It localises to the cytoplasm. Functionally, the UvrABC repair system catalyzes the recognition and processing of DNA lesions. UvrC both incises the 5' and 3' sides of the lesion. The N-terminal half is responsible for the 3' incision and the C-terminal half is responsible for the 5' incision. This is UvrABC system protein C from Salmonella enteritidis PT4 (strain P125109).